We begin with the raw amino-acid sequence, 60 residues long: Temporin-MT5 (60 aa).

Residues 1–22 form the signal peptide; the sequence is MFTLKKPLLLLFFLATINLSLC. Positions 23-44 are cleaved as a propeptide — removed in mature form; sequence EQERNAEEERRDEPDERNAEVE. Phenylalanine amide is present on Phe-58.

Belongs to the frog skin active peptide (FSAP) family. Temporin subfamily. In terms of tissue distribution, expressed by the skin glands.

It is found in the secreted. Antimicrobial peptide. The protein is Temporin-MT5 of Amolops mantzorum (Sichuan torrent frog).